The following is a 472-amino-acid chain: Ribulose bisphosphate carboxylase large chain 1 (472 aa).

Substrate-binding residues include asparagine 115 and threonine 165. Lysine 167 (proton acceptor) is an active-site residue. A substrate-binding site is contributed by lysine 169. 3 residues coordinate Mg(2+): lysine 193, aspartate 195, and glutamate 196. Position 193 is an N6-carboxylysine (lysine 193). Residue histidine 286 is the Proton acceptor of the active site. Substrate contacts are provided by arginine 287, histidine 319, and serine 371.

It belongs to the RuBisCO large chain family. Type I subfamily. In terms of assembly, heterohexadecamer of 8 large chains and 8 small chains. Mg(2+) serves as cofactor.

It carries out the reaction 2 (2R)-3-phosphoglycerate + 2 H(+) = D-ribulose 1,5-bisphosphate + CO2 + H2O. It catalyses the reaction D-ribulose 1,5-bisphosphate + O2 = 2-phosphoglycolate + (2R)-3-phosphoglycerate + 2 H(+). Its function is as follows. RuBisCO catalyzes two reactions: the carboxylation of D-ribulose 1,5-bisphosphate, the primary event in carbon dioxide fixation, as well as the oxidative fragmentation of the pentose substrate. Both reactions occur simultaneously and in competition at the same active site. The sequence is that of Ribulose bisphosphate carboxylase large chain 1 from Rhodopseudomonas palustris (strain BisB5).